The sequence spans 310 residues: Alpha/beta hydrolase domain-containing protein 17A (310 aa).

The tract at residues 38 to 61 (VPEPEPGPGGAGAAPSGPLRTSAA) is disordered. Catalysis depends on charge relay system residues S190, D255, and H284. Position 307 is a phosphoserine (S307).

It belongs to the AB hydrolase superfamily. ABHD17 family. Post-translationally, palmitoylated on cysteine residues located in a cysteine cluster at the N-terminus which promotes membrane localization. Palmitoylation is required for post-synaptic localization and for depalmitoylating activity towards DLG4/PSD95. As to expression, expressed in brain (at protein level). Expressed in hippocampal neurons.

The protein resides in the cell membrane. The protein localises to the recycling endosome membrane. It localises to the cell projection. It is found in the dendritic spine. Its subcellular location is the postsynaptic density membrane. It carries out the reaction S-hexadecanoyl-L-cysteinyl-[protein] + H2O = L-cysteinyl-[protein] + hexadecanoate + H(+). In terms of biological role, hydrolyzes fatty acids from S-acylated cysteine residues in proteins. Has depalmitoylating activity towards NRAS. Has depalmitoylating activity towards DLG4/PSD95. May have depalmitoylating activity towards MAP6. The protein is Alpha/beta hydrolase domain-containing protein 17A of Rattus norvegicus (Rat).